The primary structure comprises 614 residues: Acetylcholinesterase (614 aa).

An N-terminal signal peptide occupies residues 1–31; that stretch reads MRPPQCLLHTPSLASPLLLLLLWLLGGGVGA. A disulfide bond links C100 and C127. Residue W117 participates in galanthamine binding. W117 provides a ligand contact to huperzine A. Residue G153 coordinates huprine W. Y164 contributes to the huperzine A binding site. 233–234 is a galanthamine binding site; the sequence is ES. S234 contributes to the huprine W binding site. S234 functions as the Acyl-ester intermediate in the catalytic mechanism. C288 and C303 are disulfide-bonded. Residue N296 is glycosylated (N-linked (GlcNAc...) asparagine). E365 (charge relay system) is an active-site residue. Y368 is a binding site for galanthamine. Huperzine A is bound at residue Y368. A glycan (N-linked (GlcNAc...) asparagine) is linked at N381. Cysteines 440 and 560 form a disulfide. Residues W470 and H478 each coordinate huprine W. H478 (charge relay system) is an active-site residue. N495 is a glycosylation site (N-linked (GlcNAc...) asparagine). F588 carries the GPI-anchor amidated glycine lipid modification.

Belongs to the type-B carboxylesterase/lipase family. As to quaternary structure, interacts with PRIMA1. The interaction with PRIMA1 is required to anchor it to the basal lamina of cells and organize into tetramers. Isoform H generates GPI-anchored dimers; disulfide linked. Isoform T generates multiple structures, ranging from monomers and dimers to collagen-tailed and hydrophobic-tailed forms, in which catalytic tetramers are associated with anchoring proteins that attach them to the basal lamina or to cell membranes. In the collagen-tailed forms, isoform T subunits are associated with a specific collagen, COLQ, which triggers the formation of isoform T tetramers, from monomers and dimers. Isoform R may be monomeric. In terms of tissue distribution, isoform H is highly expressed in erythrocytes.

The protein localises to the synapse. It localises to the secreted. Its subcellular location is the cell membrane. It is found in the nucleus. The enzyme catalyses acetylcholine + H2O = choline + acetate + H(+). In terms of biological role, hydrolyzes rapidly the acetylcholine neurotransmitter released into the synaptic cleft allowing to terminate the signal transduction at the neuromuscular junction. Role in neuronal apoptosis. The chain is Acetylcholinesterase from Homo sapiens (Human).